We begin with the raw amino-acid sequence, 658 residues long: Glycogen debranching enzyme (658 aa).

Catalysis depends on aspartate 336, which acts as the Nucleophile. Glutamate 371 functions as the Proton donor in the catalytic mechanism. The disordered stretch occupies residues glutamate 459–leucine 486.

This sequence belongs to the glycosyl hydrolase 13 family.

The catalysed reaction is Hydrolysis of (1-&gt;6)-alpha-D-glucosidic linkages to branches with degrees of polymerization of three or four glucose residues in limit dextrin.. The protein operates within glycan degradation; glycogen degradation. Functionally, removes maltotriose and maltotetraose chains that are attached by 1,6-alpha-linkage to the limit dextrin main chain, generating a debranched limit dextrin. In Salmonella gallinarum (strain 287/91 / NCTC 13346), this protein is Glycogen debranching enzyme.